The chain runs to 362 residues: S-adenosylmethionine-dependent nucleotide dehydratase RSAD2 (362 aa).

Residues Gln-49–Thr-71 form a disordered region. Positions Glu-56–His-68 are enriched in basic and acidic residues. Residues Pro-70 to Leu-290 enclose the Radical SAM core domain. 3 residues coordinate [4Fe-4S] cluster: Cys-84, Cys-88, and Cys-91. Lys-198 carries the post-translational modification N6-acetyllysine. Lys-207 participates in a covalent cross-link: Glycyl lysine isopeptide (Lys-Gly) (interchain with G-Cter in ubiquitin).

This sequence belongs to the radical SAM superfamily. RSAD2 family. In terms of assembly, homodimer. Interacts with IRAK1 and TRAF6. Interacts with FPPS. Interacts with HADHB. Interacts (via C-terminus) with VAPA/VAP33 (via C-terminus). The cofactor is [4Fe-4S] cluster. In terms of processing, acetylated by HAT1. HAT1-mediated acetylation of Lys-198 in turn recruits UBE4A that stimulates RSAD2 polyubiquitination leading to proteasomal degradation. Post-translationally, 'Lys-6'-linked polyubiquitination at Lys-207 leads to RSAD2 protein degradation.

The protein resides in the endoplasmic reticulum membrane. It localises to the golgi apparatus. The protein localises to the endoplasmic reticulum. Its subcellular location is the lipid droplet. It is found in the mitochondrion. The protein resides in the mitochondrion inner membrane. It localises to the mitochondrion outer membrane. The catalysed reaction is CTP + AH2 + S-adenosyl-L-methionine = 3'-deoxy-3',4'-didehydro-CTP + 5'-deoxyadenosine + L-methionine + A + H2O + H(+). With respect to regulation, IRAK1 and TRAF6 synergistically activate RSAD2 increasing its activity with CTP as substrate about 10-fold. Its function is as follows. Interferon-inducible antiviral protein which plays a major role in the cell antiviral state induced by type I and type II interferon. Catalyzes the conversion of cytidine triphosphate (CTP) to 3'-deoxy-3',4'-didehydro-CTP (ddhCTP) via a SAM-dependent radical mechanism. In turn, ddhCTP acts as a chain terminator for the RNA-dependent RNA polymerases from multiple viruses and directly inhibits viral replication. Therefore, inhibits a wide range of DNA and RNA viruses. Also promotes TLR7 and TLR9-dependent production of IFN-beta production in plasmacytoid dendritic cells (pDCs) by facilitating 'Lys-63'-linked ubiquitination of IRAK1 by TRAF6. Plays a role in CD4+ T-cells activation and differentiation. Facilitates T-cell receptor (TCR)-mediated GATA3 activation and optimal T-helper 2 (Th2) cytokine production by modulating NFKB1 and JUNB activities. Can inhibit secretion of soluble proteins. This Sus scrofa (Pig) protein is S-adenosylmethionine-dependent nucleotide dehydratase RSAD2.